The chain runs to 260 residues: 3'-5' ssDNA/RNA exonuclease TatD (260 aa).

Residues glutamate 91, histidine 127, and histidine 152 each contribute to the a divalent metal cation site.

It belongs to the metallo-dependent hydrolases superfamily. TatD-type hydrolase family. TatD subfamily. In terms of assembly, monomer. Requires Mg(2+) as cofactor.

It is found in the cytoplasm. Its function is as follows. 3'-5' exonuclease that prefers single-stranded DNA and RNA. May play a role in the H(2)O(2)-induced DNA damage repair. The sequence is that of 3'-5' ssDNA/RNA exonuclease TatD from Escherichia fergusonii (strain ATCC 35469 / DSM 13698 / CCUG 18766 / IAM 14443 / JCM 21226 / LMG 7866 / NBRC 102419 / NCTC 12128 / CDC 0568-73).